The primary structure comprises 523 residues: DNA primase (523 aa).

The CHC2-type zinc finger occupies 37–61 (CPFHAEKTPSFFVNPLQGYFYCFGC). The 82-residue stretch at 259-340 (KSVILVEGYI…NVSVVRMDFG (82 aa)) folds into the Toprim domain. Mg(2+) contacts are provided by Glu-265, Asp-309, and Asp-311.

It belongs to the DnaG primase family. In terms of assembly, monomer. Interacts with DnaB. Zn(2+) serves as cofactor. Requires Mg(2+) as cofactor.

The catalysed reaction is ssDNA + n NTP = ssDNA/pppN(pN)n-1 hybrid + (n-1) diphosphate.. RNA polymerase that catalyzes the synthesis of short RNA molecules used as primers for DNA polymerase during DNA replication. The polypeptide is DNA primase (Borreliella burgdorferi (strain ATCC 35210 / DSM 4680 / CIP 102532 / B31) (Borrelia burgdorferi)).